The following is a 239-amino-acid chain: mRNA turnover protein 4 homolog (239 aa).

Residues phenylalanine 215–aspartate 239 are disordered. Residues serine 225, serine 229, and serine 233 each carry the phosphoserine modification. Residues serine 229–aspartate 239 show a composition bias toward acidic residues.

This sequence belongs to the universal ribosomal protein uL10 family. As to quaternary structure, associates with the pre-60S ribosomal particle. Interacts with MINAS-60 (product of an alternative open reading frame of RBM10).

Its subcellular location is the nucleus. The protein localises to the nucleolus. It is found in the cytoplasm. Functionally, component of the ribosome assembly machinery. Nuclear paralog of the ribosomal protein P0, it binds pre-60S subunits at an early stage of assembly in the nucleolus, and is replaced by P0 in cytoplasmic pre-60S subunits and mature 80S ribosomes. The chain is mRNA turnover protein 4 homolog (MRTO4) from Homo sapiens (Human).